We begin with the raw amino-acid sequence, 906 residues long: NADH-quinone oxidoreductase subunit G (906 aa).

One can recognise a 2Fe-2S ferredoxin-type domain in the interval 2-83 (AKIYVDSKIY…GAIISIKSTE (82 aa)). 4 residues coordinate [2Fe-2S] cluster: cysteine 34, cysteine 45, cysteine 48, and cysteine 67. The 4Fe-4S His(Cys)3-ligated-type domain occupies 83-122 (ESEVFRSAIVELLLTNHPHDCPVCEEGGHCHLQDMTVMVK). 12 residues coordinate [4Fe-4S] cluster: histidine 99, cysteine 103, cysteine 106, cysteine 112, cysteine 151, cysteine 154, cysteine 157, cysteine 201, cysteine 228, cysteine 231, cysteine 235, and cysteine 263. Positions 221 to 277 (MQYAPGICHNCSVGCNISIGERYGEIRRIENRYHENINHYLICDLGRFGYSHTNLNT) constitute a 4Fe-4S Mo/W bis-MGD-type domain.

The protein belongs to the complex I 75 kDa subunit family. In terms of assembly, composed of 13 different subunits. Subunits NuoCD, E, F, and G constitute the peripheral sector of the complex. It depends on [2Fe-2S] cluster as a cofactor. The cofactor is [4Fe-4S] cluster.

The enzyme catalyses a quinone + NADH + 5 H(+)(in) = a quinol + NAD(+) + 4 H(+)(out). In terms of biological role, NDH-1 shuttles electrons from NADH, via FMN and iron-sulfur (Fe-S) centers, to quinones in the respiratory chain. Couples the redox reaction to proton translocation (for every two electrons transferred, four hydrogen ions are translocated across the cytoplasmic membrane), and thus conserves the redox energy in a proton gradient. This Buchnera aphidicola subsp. Acyrthosiphon pisum (strain APS) (Acyrthosiphon pisum symbiotic bacterium) protein is NADH-quinone oxidoreductase subunit G (nuoG).